Here is a 384-residue protein sequence, read N- to C-terminus: F-box/kelch-repeat protein At3g44120 (384 aa).

The F-box domain occupies 1–46 (MTLPELPKDLVEEILCFVPATSLKRLRSSCKEWNRLFKDDKRFARK). Kelch repeat units lie at residues 156 to 202 (CNKS…RECF), 264 to 314 (SVLV…FLLD), and 352 to 384 (GVQT…KRDY).

In Arabidopsis thaliana (Mouse-ear cress), this protein is F-box/kelch-repeat protein At3g44120.